A 546-amino-acid chain; its full sequence is MAAKDVKFSRDARERILRGVDILADAVKVTLGPKGRNVVLDKAFGAPRITKDGVSVAKEIELKDKFENMGAQMLREVASKTNDLAGDGTTTATVLAQAIVREGMKSVAAGMNPMDLKRGIDLAATKVVESLRSRSKPVSDFNEVAQVGIISANGDEEVGRRIAEAMEKVGKEGVITVEEAKGFDFELDVVEGMQFDRGYLSPYFITNPEKMVAELADPYILIYEKKLSNLQSILPILESVVQSGRPLLIIAEDIEGEALATLVVNKLRGGLKVAAVKAPGFGDRRKAMLEDIAILTKGELISEDLGIKLENVTLNMLGSAKRVSITKENTTIVDGAGDQSTIKDRVEAIRSQIEATTSDYDREKLQERVAKLAGGVAVIKVGGATEVEVKERKDRVDDALHATRAAVQEGIVPGGGTALLYATKTLEGLNGVNEDQQRGIDIVRRALQAPVRQIAQNAGFDGAVVAGKLIDGNDDKIGFNAQTEKYEDLAATGVIDPTKVVRTALQDAASVAGLLITTEAAVGDLPEDKPAPAMPGGMGGMGGMDF.

ATP contacts are provided by residues 30–33 (TLGP), K51, 87–91 (DGTTT), G415, and D496. Residues 526-546 (PEDKPAPAMPGGMGGMGGMDF) form a disordered region. The segment covering 536–546 (GGMGGMGGMDF) has biased composition (gly residues).

The protein belongs to the chaperonin (HSP60) family. In terms of assembly, forms a cylinder of 14 subunits composed of two heptameric rings stacked back-to-back. Interacts with the co-chaperonin GroES.

The protein localises to the cytoplasm. The catalysed reaction is ATP + H2O + a folded polypeptide = ADP + phosphate + an unfolded polypeptide.. Together with its co-chaperonin GroES, plays an essential role in assisting protein folding. The GroEL-GroES system forms a nano-cage that allows encapsulation of the non-native substrate proteins and provides a physical environment optimized to promote and accelerate protein folding. The chain is Chaperonin GroEL from Zymomonas mobilis subsp. mobilis (strain ATCC 31821 / ZM4 / CP4).